Here is a 1935-residue protein sequence, read N- to C-terminus: MFSLPSFLTTFSFTLPSLPSISLPANIQRRFLSYVLKRTLGRFVSHQALDAERIQAQVSEGWVEIENLEIECSEINNYIPPPLPLSLTSGTINKLTAKLPFPNLWSDPLQVSLDTLTLDFTLSSPSPLSRGRAATRPEHHDLAESVTSAADDFLHHELDAYEEKELEGSIRQSLILSQTDPFISDVPGGFPLGSPGEISPGRPLPANMESTTVLAGMVERILARLEFRVEKIKIRLVIEDEEDVVELTVGRIRYADESEAQTNDDGKSTTRAIRISNISLDIVPSQRKPPSLVIPQRQSLEPSVSSSTSTASTSSGNDYSDMFMSQAVVDLRQSLLTPEQISEPANEQTVHESNMFYSALSQPNESEPGASTGIKRSGISQNPKLADEIEEERSRSETPTPETKPQPSGIPVLSFGQEDVVLHMRTTRPLISAGHQTSFNDNKPTVEMNITIGTITTVLLPSHLKLFISALQTLQALCQKDDVPAAKDKPAQSTSPQTRLTATTKLKAFYVSLVYDLSAETSLNLHSTMASHLTRPTNPIPYPHLRFRLDTLVASYQSPGHSNPSRPAFTRPTPNMSTANLRRKSSGHARFGSLPSNLTVNVGDISLFEWMGEGMIAPVILFDPGLKHQYDLPSAPPHKGQAGFPECECRDWREEKKTGSEKAWRVRPRGRGILKGGARATTEDEGPVVHVRQDLGSDSAAVINLQSLHVFVDLSLIERLLPLLRSVTPLIHPPEPTPAWLQSVPSQSISEEITPESIISSLSAPPPTARGKKMKADIRCDLVRLSVRCPAPPPEPAERQIGDGRQLRSGIVFVDVHGLKSRFMDTSRTGTRPASSEVANVEFEQTLIFFASVSQHYAYPFLIFAPLSPEPGEEDIPLLPSISLSSFPQASSLPASSIAKTTLVTCKMPAIRASVHHPTVTGLQYFADDVTRWLDVAFADGSAKPRDELKMIGSRFFGGSKGSEASSEIDEPYDVEEVAAGMKVEIEISEIDMGLYVPRLDASGERVFSFKANDLGVRMETHPEENETALELSIMDLDFSDVSSTPLRILGRTTPFTLTSHQAPVVYLRFVSSTDLRTTLKESNISVALSHFTFAVHKEIAWLHEIAQFAKPPKGVFENLSPTDLTRLSINLSSASFLLVPPNLPGSIVILVREVEGKTEIPKGATDSVLEVGMSGLGALAVEGESGPLEVSSDLADVWKKAGYAQLAEVMVLELRLMRELVAAGEVSLDITQAQFKVTACADSLATFAEIATDFGHSLDENAFNLLPEIVSHSDTDMIEDDLPHNLDYLDHATRISKHYPSMDRTTGENLRAWHTPEEGLEEGEWENGESGETIRAFGGEIEEEEGYWEGLPILNDVYSADQKPGKIHIRVLDASLKIFLHDGYDWPRTRKAIEDEVRAVRRRLERIRQLLASGQKADESIENATSSVLFNSIYIGLEQKGEMGLSTMGMGKMDEKALMAAIDEELDGMETESGSSWQTLPAGVGAGPSAVHQAHKKTRLKGKRLVRSKKAQIEITLSGIKTDVDLYPTEESTSSRVHFTAKEMEILDHIKTSTWKKFLTEMKADNRGNIRETDADMLRIELVGVRLKEDEEELRLRAKILPLRLHVDQDALDFLKRFFSFKAPPMTSARPLAQHTTSSTPDLYFQHVEIFPIQLKLDYKPKRVDFRALREGKTIELMNFFHFEGAEMTLRHITLSGITGLERLGTTLQDLWTPDVKANQLADVISGVSPIRSMVNVGSGVADLILLPIEQYRKDGRIAKGVQRGTNSFVKSTALEVMKLGARLATGTQVILERAEGVLGGKSGEDVVGQVQGLSTNAFGVDSGMLEGGSSSEDEQEAISRYADQPESMKEGVQAAYKSLSKNVNAAAQTILAVPMEVYERSGDDGPLKAVIRAVPIAVLKPMIGTTEAVSKTLLGMRNSLDPSARRELDDKYK.

Residues 30–121 (RFLSYVLKRT…SLDTLTLDFT (92 aa)) enclose the Chorein N-terminal domain. Disordered stretches follow at residues 286-319 (QRKP…GNDY) and 360-412 (LSQP…GIPV). Over residues 303–315 (SVSSSTSTASTSS) the composition is skewed to low complexity. Positions 397-406 (ETPTPETKPQ) are enriched in polar residues.

Belongs to the ATG2 family.

It is found in the preautophagosomal structure membrane. The protein resides in the endoplasmic reticulum membrane. The enzyme catalyses a 1,2-diacyl-sn-glycero-3-phosphocholine(in) = a 1,2-diacyl-sn-glycero-3-phosphocholine(out). It catalyses the reaction a 1,2-diacyl-sn-glycero-3-phospho-L-serine(in) = a 1,2-diacyl-sn-glycero-3-phospho-L-serine(out). It carries out the reaction a 1,2-diacyl-sn-glycero-3-phosphoethanolamine(in) = a 1,2-diacyl-sn-glycero-3-phosphoethanolamine(out). Its function is as follows. Lipid transfer protein required for autophagosome completion and peroxisome degradation. Tethers the edge of the isolation membrane (IM) to the endoplasmic reticulum (ER) and mediates direct lipid transfer from ER to IM for IM expansion. ATG2 binds to the ER exit site (ERES), which is the membrane source for autophagosome formation, using basic residues in its N-terminal region (NR) and to the expanding edge of the IM through its C-terminal region. The latter binding is assisted by an ATG18-PtdIns3P interaction. ATG2 then extracts phospholipids from the membrane source using its NR and transfers them to ATG9 to the IM through its predicted beta-sheet-rich structure for membrane expansion. This Cryptococcus neoformans var. neoformans serotype D (strain B-3501A) (Filobasidiella neoformans) protein is Autophagy-related protein 2 (ATG2).